Here is a 174-residue protein sequence, read N- to C-terminus: ATP synthase subunit b (174 aa).

The chain crosses the membrane as a helical span at residues 18 to 38; sequence IIVVSGSFLILMFLLKHFAWG.

It belongs to the ATPase B chain family. F-type ATPases have 2 components, F(1) - the catalytic core - and F(0) - the membrane proton channel. F(1) has five subunits: alpha(3), beta(3), gamma(1), delta(1), epsilon(1). F(0) has three main subunits: a(1), b(2) and c(10-14). The alpha and beta chains form an alternating ring which encloses part of the gamma chain. F(1) is attached to F(0) by a central stalk formed by the gamma and epsilon chains, while a peripheral stalk is formed by the delta and b chains.

The protein resides in the cell membrane. In terms of biological role, f(1)F(0) ATP synthase produces ATP from ADP in the presence of a proton or sodium gradient. F-type ATPases consist of two structural domains, F(1) containing the extramembraneous catalytic core and F(0) containing the membrane proton channel, linked together by a central stalk and a peripheral stalk. During catalysis, ATP synthesis in the catalytic domain of F(1) is coupled via a rotary mechanism of the central stalk subunits to proton translocation. Its function is as follows. Component of the F(0) channel, it forms part of the peripheral stalk, linking F(1) to F(0). The protein is ATP synthase subunit b of Enterococcus hirae (strain ATCC 9790 / DSM 20160 / JCM 8729 / LMG 6399 / NBRC 3181 / NCIMB 6459 / NCDO 1258 / NCTC 12367 / WDCM 00089 / R).